A 502-amino-acid chain; its full sequence is Glycogen synthase (502 aa).

Residue lysine 24 coordinates ADP-alpha-D-glucose.

It belongs to the glycosyltransferase 1 family. Bacterial/plant glycogen synthase subfamily.

It catalyses the reaction [(1-&gt;4)-alpha-D-glucosyl](n) + ADP-alpha-D-glucose = [(1-&gt;4)-alpha-D-glucosyl](n+1) + ADP + H(+). It participates in glycan biosynthesis; glycogen biosynthesis. Its function is as follows. Synthesizes alpha-1,4-glucan chains using ADP-glucose. The protein is Glycogen synthase of Nitrosomonas eutropha (strain DSM 101675 / C91 / Nm57).